The primary structure comprises 70 residues: Small ribosomal subunit protein bS21A (70 aa).

This sequence belongs to the bacterial ribosomal protein bS21 family.

The chain is Small ribosomal subunit protein bS21A (rpsU1) from Burkholderia mallei (strain ATCC 23344).